A 216-amino-acid polypeptide reads, in one-letter code: Pyridoxine/pyridoxamine 5'-phosphate oxidase 1 (216 aa).

Substrate contacts are provided by residues 10–13 and lysine 68; that span reads RREY. FMN is bound by residues 63-68, 78-79, lysine 85, and glutamine 107; these read RIVLLK and YT. Substrate is bound by residues tyrosine 125, arginine 129, and serine 133. Residues 142-143 and tryptophan 186 contribute to the FMN site; that span reads QS. Substrate is bound at residue 192–194; the sequence is RLH. Arginine 196 lines the FMN pocket.

The protein belongs to the pyridoxamine 5'-phosphate oxidase family. In terms of assembly, homodimer. FMN serves as cofactor.

It catalyses the reaction pyridoxamine 5'-phosphate + O2 + H2O = pyridoxal 5'-phosphate + H2O2 + NH4(+). The enzyme catalyses pyridoxine 5'-phosphate + O2 = pyridoxal 5'-phosphate + H2O2. It functions in the pathway cofactor metabolism; pyridoxal 5'-phosphate salvage; pyridoxal 5'-phosphate from pyridoxamine 5'-phosphate: step 1/1. It participates in cofactor metabolism; pyridoxal 5'-phosphate salvage; pyridoxal 5'-phosphate from pyridoxine 5'-phosphate: step 1/1. Catalyzes the oxidation of either pyridoxine 5'-phosphate (PNP) or pyridoxamine 5'-phosphate (PMP) into pyridoxal 5'-phosphate (PLP). This is Pyridoxine/pyridoxamine 5'-phosphate oxidase 1 from Hydrogenovibrio crunogenus (strain DSM 25203 / XCL-2) (Thiomicrospira crunogena).